The following is a 198-amino-acid chain: MADTASKYAVKLRPNFDNPKWVNRHKFMFNFLDINGDGKITLDEIVSKASDDICAKLGATPEQTKRHQDAVEAFFKKIGMDYGKEVEFPAFVDGWKELANYDLKLWSQNKKSLIRDWGEAVFDIFDKDGSGSISLDEWKAYGRISGICSSDEDAEKTFKHCDLDNSGKLDVDEMTRQHLGFWYTLDPNADGLYGNFVP.

A propeptide spanning residues 1-9 (MADTASKYA) is cleaved from the precursor. 4 EF-hand domains span residues 20-55 (KWVN…DICA), 60-95 (TPEQ…VDGW), 119-148 (EAVF…SGIC), and 149-184 (SSDE…FWYT). Ca(2+) is bound by residues Asp33, Asn35, Asp37, Lys39, and Glu44. 10 residues coordinate Ca(2+): Asp126, Asp128, Ser130, Ser132, Glu137, Asp162, Asp164, Ser166, Lys168, and Glu173.

The protein belongs to the aequorin family.

Its function is as follows. Ca(2+)-dependent bioluminescence photoprotein. Displays an emission peak at 470 nm (blue light). Trace amounts of calcium ion trigger the intramolecular oxidation of the chromophore, coelenterazine into coelenteramide and CO(2) with the concomitant emission of light. This Clytia gregaria (Gregarious jellyfish) protein is Clytin.